Here is a 579-residue protein sequence, read N- to C-terminus: Extracellular serine/threonine protein kinase FAM20C (579 aa).

Over 1 to 10 (MKMILVRRFR) the chain is Cytoplasmic. Residues 1–87 (MKMILVRRFR…PNKHTLRILQ (87 aa)) constitute a propeptide that is removed on maturation. A helical; Signal-anchor for type II membrane protein membrane pass occupies residues 11-31 (VLILVVFLLACALHIAVDLLP). The Lumenal segment spans residues 32–579 (KLDRRATRSS…ATEHRASTER (548 aa)). Residues 38–79 (TRSSGEPGCSCAQPAAEAAGPGWAQARSRPGESAGGDAGWPN) are disordered. Residues 49 to 63 (AQPAAEAAGPGWAQA) are compositionally biased toward low complexity. N-linked (GlcNAc...) asparagine glycosylation occurs at Asn96. Residues 104–155 (KLPSAAEPVDHAPRGQEPRSPPPRDPAHRPLLRDPGPRPRVPPPGPSGDGSL) are disordered. 2 stretches are compositionally biased toward basic and acidic residues: residues 111 to 120 (PVDHAPRGQE) and 128 to 140 (DPAHRPLLRDPGP). Gln264, Lys280, and Glu301 together coordinate ATP. Glu301 lines the Mn(2+) pocket. The tract at residues 349 to 560 (FVSPANNICF…AVRDCVEKDG (212 aa)) is kinase domain. 2 disulfides stabilise this stretch: Cys357–Cys373 and Cys362–Cys366. An ATP-binding site is contributed by 384-387 (AAFL). 2 disulfides stabilise this stretch: Cys421–Cys495 and Cys496–Cys555. Asp453 is a catalytic residue. Glu458 and Asp473 together coordinate ATP. Asp473 is a binding site for Mn(2+).

The protein belongs to the FAM20 family. Homodimer; disulfide-linked. Interacts with FAM20A; probably forming a heterotetramer of 2 subunits of FAM20A and 2 subunits of FAM20C. Interacts with COPII components SEC23A and SEC24A; transport of FAM20C from the endoplasmic reticulum to the Golgi is likely to be mediated by COPII vesicles. Mn(2+) is required as a cofactor. In terms of processing, N-glycosylation is required for folding. Autophosphorylated. Post-translationally, propeptide cleavage by MBTPS1/S1P promotes FAM20C secretion and maximal kinase activity which is essential for efficient osteoblast differentiation and biomineralization. In terms of tissue distribution, in the mammary gland, expressed at higher levels in lactating mice than in virgin mice (at protein level). Highly expressed in the tooth. No expression in the dental pulp. At the secretory stage of amelogenesis, it is detected in the matrix of the enamel, in the ameloblasts, and within the cells adjoining the stratum intermedium (a tissue layer analogous to the stellate reticulum seen in the developing molar). Strong expression is observed in maturation stage ameloblasts and throughout the non-cornified layers of the gingival epithelium. Expressed at moderate levels in bone and at low levels in kidney, liver, brain and lung. Very low expression, if any, in spleen and skeletal muscle.

It is found in the golgi apparatus membrane. The protein resides in the secreted. The protein localises to the endoplasmic reticulum. It carries out the reaction L-seryl-[protein] + ATP = O-phospho-L-seryl-[protein] + ADP + H(+). It catalyses the reaction L-threonyl-[protein] + ATP = O-phospho-L-threonyl-[protein] + ADP + H(+). Its activity is regulated as follows. Serine/threonine protein kinase activity is increased upon interaction with FAM20A. Functionally, golgi serine/threonine protein kinase that phosphorylates secretory pathway proteins within Ser-x-Glu/pSer motifs and plays a key role in biomineralization of bones and teeth. Constitutes the main protein kinase for extracellular proteins, generating the majority of the extracellular phosphoproteome. Mainly phosphorylates proteins within the Ser-x-Glu/pSer motif, but also displays a broader substrate specificity. Phosphorylates ERO1A, enhancing its activity which is required to maintain endoplasmic reticulum redox homeostasis and for oxidative protein folding. During endoplasmic reticulum stress, phosphorylates P4HB/PDIA1 which induces a functional switch, causing P4HB to change from an oxidoreductase to a molecular chaperone. This is critical to maintain ER proteostasis and reduce cell death under ER stress. Phosphorylation of P4HB also promotes its interaction with ERN1, leading to reduced activity of ERN1, a key sensor for the endoplasmic reticulum unfolded protein response. Required for osteoblast differentiation and mineralization. Phosphorylates casein as well as a number of proteins involved in biomineralization such as AMELX, AMTN, ENAM and SPP1. In addition to its role in biomineralization, also plays a role in lipid homeostasis, wound healing and cell migration and adhesion. This chain is Extracellular serine/threonine protein kinase FAM20C, found in Mus musculus (Mouse).